The sequence spans 57 residues: Large ribosomal subunit protein bL32 (57 aa).

The segment covering 1–19 (MAVPKRRMSRANTRSRRAQ) has biased composition (basic residues). Residues 1–20 (MAVPKRRMSRANTRSRRAQW) are disordered.

This sequence belongs to the bacterial ribosomal protein bL32 family.

This chain is Large ribosomal subunit protein bL32, found in Mycolicibacterium smegmatis (strain ATCC 700084 / mc(2)155) (Mycobacterium smegmatis).